The following is a 549-amino-acid chain: Polynucleotide 5'-hydroxyl-kinase nol-9 (549 aa).

ATP is bound at residue 190 to 197; it reads GHKGAGKS.

It belongs to the Clp1 family. NOL9/GRC3 subfamily.

Its subcellular location is the nucleus. It is found in the nucleolus. Its function is as follows. Polynucleotide 5'-kinase involved in rRNA processing. This chain is Polynucleotide 5'-hydroxyl-kinase nol-9 (nol-9), found in Caenorhabditis elegans.